The following is a 356-amino-acid chain: Glutamine synthetase (356 aa).

Residues 26-105 (IMAEYVWVDA…VLAECWNAGG (80 aa)) enclose the GS beta-grasp domain. The GS catalytic domain occupies 112–356 (FRHDCVKVMD…TKALLQFSLA (245 aa)).

This sequence belongs to the glutamine synthetase family. In terms of assembly, homooctamer.

It localises to the cytoplasm. It carries out the reaction L-glutamate + NH4(+) + ATP = L-glutamine + ADP + phosphate + H(+). The protein is Glutamine synthetase (GLN1) of Fusarium solani subsp. phaseoli (Nectria haematococca).